Reading from the N-terminus, the 663-residue chain is Polyunsaturated fatty acid lipoxygenase ALOX15 (663 aa).

One can recognise a PLAT domain in the interval 2-115 (GLYRVRVSTG…ILSLPEGTGR (114 aa)). The 548-residue stretch at 116 to 663 (TVVDDPQGLF…PSLVENSVAI (548 aa)) folds into the Lipoxygenase domain. Residues histidine 361, histidine 366, histidine 541, histidine 545, and isoleucine 663 each coordinate Fe cation.

The protein belongs to the lipoxygenase family. As to quaternary structure, interacts with PEBP1; in response to IL13/interleukin-13, prevents the interaction of PEBP1 with RAF1 to activate the ERK signaling cascade. Fe cation serves as cofactor. In terms of tissue distribution, detected in tracheal epithelium.

Its subcellular location is the cytoplasm. The protein resides in the cytosol. It is found in the cell membrane. It localises to the lipid droplet. It catalyses the reaction (5Z,8Z,11Z,14Z)-eicosatetraenoate + O2 = (12S)-hydroperoxy-(5Z,8Z,10E,14Z)-eicosatetraenoate. The enzyme catalyses (5Z,8Z,11Z,14Z)-eicosatetraenoate + O2 = (15S)-hydroperoxy-(5Z,8Z,11Z,13E)-eicosatetraenoate. It carries out the reaction (9Z,12Z)-octadecadienoate + O2 = (13S)-hydroperoxy-(9Z,11E)-octadecadienoate. The catalysed reaction is (5Z,8Z,11Z,14Z)-eicosatetraenoate + 2 O2 = (14R,15S)-dihydroperoxy-(5Z,8Z,10E,12E)-eicosatetraenoate. It catalyses the reaction (5Z,8Z,11Z,14Z)-eicosatetraenoate + 2 O2 = (8S,15S)-dihydroperoxy-(5Z,9E,11Z,13E)-eicosatetraenoate. The enzyme catalyses (14S,15R)-epoxy-(5Z,8Z,11Z)-eicosatrienoate + O2 = (8S)-hydroperoxy-(14S,15R)-epoxy-(5Z,9E,11Z)-eicosatrienoate. It carries out the reaction (14S,15R)-epoxy-(5Z,8Z,11Z)-eicosatrienoate + O2 = (12S)-hydroperoxy-(14S,15R)-epoxy-(5Z,8Z,10E)-eicosatrienoate. The catalysed reaction is (14R,15S)-epoxy-(5Z,8Z,11Z)-eicosatrienoate + O2 = (5S)-hydroperoxy-(14R,15S)-epoxy-(6E,8Z,11Z)-eicosatrienoate. It catalyses the reaction (14R,15S)-epoxy-(5Z,8Z,11Z)-eicosatrienoate + O2 = (12S)-hydroperoxy-(14R,15S)-epoxy-(5Z,8Z,10E)-eicosatrienoate. The enzyme catalyses (15R)-hydroperoxy-(5Z,8Z,11Z,13E)-eicosatetraenoate = 15-oxo-(5Z,8Z,11Z,13E)-eicosatetraenoate + H2O. It carries out the reaction (15S)-hydroperoxy-(5Z,8Z,11Z,13E)-eicosatetraenoate = (14S,15S)-epoxy-(5Z,8Z,10E,12E)-eicosatetraenoate + H2O. The catalysed reaction is (12S)-hydroperoxy-(5Z,8Z,10E,14Z)-eicosatetraenoate = (8S)-hydroxy-(11S,12S)-epoxy-(5Z,9E,14Z)-eicosatrienoate. It catalyses the reaction (4Z,7Z,10Z,13Z,16Z)-docosapentaenoate + O2 = 14-hydroperoxy-(4Z,7Z,10Z,12E,16Z)-docosapentaenoate. The enzyme catalyses (7Z,10Z,13Z,16Z,19Z)-docosapentaenoate + O2 = 14-hydroperoxy-(7Z,10Z,12E,16Z,19Z)-docosapentaenoate. It carries out the reaction (4Z,7Z,10Z,13Z,16Z,19Z)-docosahexaenoate + O2 = (14S)-hydroperoxy-(4Z,7Z,10Z,12E,16Z,19Z)-docosahexaenoate. The catalysed reaction is (4Z,7Z,10Z,13Z,16Z,19Z)-docosahexaenoate + O2 = (17S)-hydroperoxy-(4Z,7Z,10Z,13Z,15E,19Z)-docosahexaenoate. It catalyses the reaction (7S)-hydroperoxy-(4Z,8E,10Z,13Z,16Z,19Z)-docosahexaenoate + O2 = (7S,14S)-dihydroperoxy-(4Z,8E,10Z,12E,16Z,19Z)-docosahexaenoate. The enzyme catalyses (7S)-hydroperoxy-(4Z,8E,10Z,13Z,16Z,19Z)-docosahexaenoate + O2 = (7S,17S)-dihydroperoxy-(4Z,8E,10Z,13Z,15E,19Z)-docosahexaenoate. It carries out the reaction (4Z,7Z,10Z,13Z,16Z,19Z)-docosahexaenoate + O2 = (11S)-hydroperoxy-(4Z,7Z,9E,13Z,16Z,19Z)-docosahexaenoate. The catalysed reaction is N-(5Z,8Z,11Z,14Z)-eicosatetraenoyl-taurine + O2 = N-(12S)-hydroperoxy-(5Z,8Z,10E,14Z)-eicosatetraenoyl-taurine. It catalyses the reaction N-(5Z,8Z,11Z,14Z)-eicosatetraenoyl-gamma-aminobutanoate + O2 = N-(12S)-hydroperoxy-(5Z,8Z,10E,14Z)-eicosatetraenoyl-gamma-aminobutanoate. The enzyme catalyses N-(5Z,8Z,11Z,14Z)-eicosatetraenoyl-glycine + O2 = N-(12S)-hydroperoxy-(5Z,8Z,10E,14Z)-eicosatetraenoyl-glycine. It carries out the reaction N-(5Z,8Z,11Z,14Z)-eicosatetraenoyl-L-alanine + O2 = N-(12S)-hydroperoxy-(5Z,8Z,10E,14Z)-eicosatetraenoyl-alanine. The catalysed reaction is N-(5Z,8Z,11Z,14Z)-eicosatetraenoyl-taurine + O2 = N-(15S)-hydroperoxy-(5Z,8Z,11Z,13E)-eicosatetraenoyl-taurine. It catalyses the reaction N-(5Z,8Z,11Z,14Z)-eicosatetraenoyl-gamma-aminobutanoate + O2 = N-(15S)-hydroperoxy-(5Z,8Z,11Z,13E)-eicosatetraenoyl-gamma-aminobutanoate. The enzyme catalyses N-(5Z,8Z,11Z,14Z)-eicosatetraenoyl-glycine + O2 = N-(15S)-hydroperoxy-(5Z,8Z,11Z,13E)-eicosatetraenoyl-glycine. It carries out the reaction N-(5Z,8Z,11Z,14Z)-eicosatetraenoyl-L-alanine + O2 = N-(15S)-hydroperoxy-(5Z,8Z,11Z,13E)-eicosatetraenoyl-alanine. Its pathway is lipid metabolism; hydroperoxy eicosatetraenoic acid biosynthesis. Functionally, non-heme iron-containing dioxygenase that catalyzes the stereo-specific peroxidation of free and esterified polyunsaturated fatty acids generating a spectrum of bioactive lipid mediators. It inserts peroxyl groups at C12 or C15 of arachidonate ((5Z,8Z,11Z,14Z)-eicosatetraenoate) producing both 12-hydroperoxyeicosatetraenoate/12-HPETE and 15-hydroperoxyeicosatetraenoate/15-HPETE. It may then act on 12-HPETE to produce hepoxilins, which may show pro-inflammatory properties. Can also peroxidize linoleate ((9Z,12Z)-octadecadienoate) to 13-hydroperoxyoctadecadienoate. May participate in the sequential oxidations of DHA ((4Z,7Z,10Z,13Z,16Z,19Z)-docosahexaenoate) to generate specialized pro-resolving mediators (SPMs)like resolvin D5 ((7S,17S)-diHPDHA) and (7S,14S)-diHPDHA, that actively down-regulate the immune response and have anti-aggregation properties with platelets. Can convert epoxy fatty acids to hydroperoxy-epoxides derivatives followed by an intramolecular nucleophilic substitution leading to the formation of monocyclic endoperoxides. Plays an important role during the maintenance of self-tolerance by peroxidizing membrane-bound phosphatidylethanolamine which can then signal the sorting process for clearance of apoptotic cells during inflammation and prevent an autoimmune response. In addition to its role in the immune and inflammatory responses, this enzyme may play a role in epithelial wound healing in the cornea through production of lipoxin A4 (LXA(4)) and docosahexaenoic acid-derived neuroprotectin D1 (NPD1; 10R,17S-HDHA), both lipid autacoids exhibit anti-inflammatory and neuroprotective properties. Furthermore, it may regulate actin polymerization which is crucial for several biological processes such as the phagocytosis of apoptotic cells. It is also implicated in the generation of endogenous ligands for peroxisome proliferator activated receptor (PPAR-gamma), hence modulating macrophage development and function. It may also exert a negative effect on skeletal development by regulating bone mass through this pathway. As well as participates in ER stress and downstream inflammation in adipocytes, pancreatic islets, and liver. Finally, it is also involved in the cellular response to IL13/interleukin-13. The protein is Polyunsaturated fatty acid lipoxygenase ALOX15 of Bos taurus (Bovine).